Here is a 161-residue protein sequence, read N- to C-terminus: NADH-quinone oxidoreductase subunit I (161 aa).

4Fe-4S ferredoxin-type domains are found at residues 52-82 (LRRY…IESE) and 92-121 (SRYD…ETRV). [4Fe-4S] cluster-binding residues include Cys62, Cys65, Cys68, Cys72, Cys101, Cys104, Cys107, and Cys111.

This sequence belongs to the complex I 23 kDa subunit family. As to quaternary structure, NDH-1 is composed of 14 different subunits. Subunits NuoA, H, J, K, L, M, N constitute the membrane sector of the complex. [4Fe-4S] cluster serves as cofactor.

Its subcellular location is the cell inner membrane. It carries out the reaction a quinone + NADH + 5 H(+)(in) = a quinol + NAD(+) + 4 H(+)(out). NDH-1 shuttles electrons from NADH, via FMN and iron-sulfur (Fe-S) centers, to quinones in the respiratory chain. The immediate electron acceptor for the enzyme in this species is believed to be ubiquinone. Couples the redox reaction to proton translocation (for every two electrons transferred, four hydrogen ions are translocated across the cytoplasmic membrane), and thus conserves the redox energy in a proton gradient. This chain is NADH-quinone oxidoreductase subunit I, found in Azoarcus sp. (strain BH72).